We begin with the raw amino-acid sequence, 377 residues long: MKFKYGTVVLGSFLGLSVVLAACGARGKFDQFDDGKIKLASSLTSKAAANALQTIIEKYNIVKSGKDYPIEITQIAGGYDGGRTDLQTRVSVKDKTNFYNLILNYPDLVSVLARSGMELLFDKVNVDKLEPNFLKFNEQISGVAKSGNYGIPVSLSTDILVLNGPVLHYILNSAKKEEANSQVKSQIKTSQIQAKGSLTIDTDENTKSLWEKIQNSAKANGETNQKGRKAAKSNKTALVQLKNGADTTTNEENKDTKTSDDKVKQTWGDYVEKDDGLKNYTFRASVFENWHDFLDFSTRVAKSFTEKVSNITNKKGTDIQGVLGVDSSPNVLFASVFAAGGGNYENFFYKLKDGRADFSNFKNKGSSYQNLQSVFKD.

Residues 1 to 22 (MKFKYGTVVLGSFLGLSVVLAA) form the signal peptide. A lipid anchor (N-palmitoyl cysteine) is attached at cysteine 23. Residue cysteine 23 is the site of S-diacylglycerol cysteine attachment. The interval 217–260 (AKANGETNQKGRKAAKSNKTALVQLKNGADTTTNEENKDTKTSD) is disordered. A compositionally biased stretch (basic and acidic residues) spans 251–260 (EENKDTKTSD).

It belongs to the MG185/MG260 family.

It is found in the cell membrane. This is an uncharacterized protein from Mycoplasma pneumoniae (strain ATCC 29342 / M129 / Subtype 1) (Mycoplasmoides pneumoniae).